A 357-amino-acid chain; its full sequence is Biotin synthase (357 aa).

The Radical SAM core domain maps to 41–268; the sequence is NEVQISRLLS…KSRVRLSAGR (228 aa). [4Fe-4S] cluster contacts are provided by C56, C60, and C63. The [2Fe-2S] cluster site is built by C100, C131, C191, and R263.

This sequence belongs to the radical SAM superfamily. Biotin synthase family. As to quaternary structure, homodimer. It depends on [4Fe-4S] cluster as a cofactor. The cofactor is [2Fe-2S] cluster.

It catalyses the reaction (4R,5S)-dethiobiotin + (sulfur carrier)-SH + 2 reduced [2Fe-2S]-[ferredoxin] + 2 S-adenosyl-L-methionine = (sulfur carrier)-H + biotin + 2 5'-deoxyadenosine + 2 L-methionine + 2 oxidized [2Fe-2S]-[ferredoxin]. The protein operates within cofactor biosynthesis; biotin biosynthesis; biotin from 7,8-diaminononanoate: step 2/2. Catalyzes the conversion of dethiobiotin (DTB) to biotin by the insertion of a sulfur atom into dethiobiotin via a radical-based mechanism. The sequence is that of Biotin synthase from Shewanella denitrificans (strain OS217 / ATCC BAA-1090 / DSM 15013).